A 319-amino-acid polypeptide reads, in one-letter code: Oxaloacetate tautomerase fahd2, mitochondrial (319 aa).

The N-terminal 31 residues, 1-31, are a transit peptide targeting the mitochondrion; sequence MLTQTRVALRVLKNAHLTLPKRNISQSPALS. The Mg(2+) site is built by Glu-164, Glu-166, and Asp-195.

It belongs to the FAH family. Mg(2+) serves as cofactor. Requires Mn(2+) as cofactor.

The protein resides in the mitochondrion. The catalysed reaction is oxaloacetate = enol-oxaloacetate. In terms of biological role, tautomerase that converts enol-oxaloacetate, a strong inhibitor of succinate dehydrogenase, to the physiological keto form of oxaloacetate. It is thereby required to maximize aerobic respiration efficiency by preventing succinate dehydrogenase inhibition. This chain is Oxaloacetate tautomerase fahd2, mitochondrial (fahd2), found in Xenopus laevis (African clawed frog).